A 436-amino-acid chain; its full sequence is Adenylyltransferase and sulfurtransferase UBA4 (436 aa).

ATP contacts are provided by residues Gly74, Asp95, 102–106 (SNLHR), Lys119, and 163–164 (DT). Zn(2+) contacts are provided by Cys205 and Cys208. Cys222 acts as the Glycyl thioester intermediate; for adenylyltransferase activity in catalysis. Positions 283 and 286 each coordinate Zn(2+). In terms of domain architecture, Rhodanese spans 335 to 434 (NEKDHILIDV…YIDEEDHSYP (100 aa)). Cys393 (cysteine persulfide intermediate; for sulfurtransferase activity) is an active-site residue.

The protein in the N-terminal section; belongs to the HesA/MoeB/ThiF family. UBA4 subfamily. Zn(2+) is required as a cofactor.

The protein localises to the cytoplasm. It localises to the cytosol. It functions in the pathway tRNA modification; 5-methoxycarbonylmethyl-2-thiouridine-tRNA biosynthesis. In terms of biological role, plays a central role in 2-thiolation of mcm(5)S(2)U at tRNA wobble positions of cytosolic tRNA(Lys), tRNA(Glu) and tRNA(Gln). Acts by mediating the C-terminal thiocarboxylation of sulfur carrier URM1. Its N-terminus first activates URM1 as acyl-adenylate (-COAMP), then the persulfide sulfur on the catalytic cysteine is transferred to URM1 to form thiocarboxylation (-COSH) of its C-terminus. The reaction probably involves hydrogen sulfide that is generated from the persulfide intermediate and that acts as a nucleophile towards URM1. Subsequently, a transient disulfide bond is formed. Does not use thiosulfate as sulfur donor; NFS1 probably acting as a sulfur donor for thiocarboxylation reactions. Prior mcm(5) tRNA modification by the elongator complex is required for 2-thiolation. May also be involved in protein urmylation. The protein is Adenylyltransferase and sulfurtransferase UBA4 of Vanderwaltozyma polyspora (strain ATCC 22028 / DSM 70294 / BCRC 21397 / CBS 2163 / NBRC 10782 / NRRL Y-8283 / UCD 57-17) (Kluyveromyces polysporus).